Here is a 607-residue protein sequence, read N- to C-terminus: MNKEERAKRQSKIRNFSIIAHIDHGKSTLADRILEKTNALTQREMKAQLLDSMDLERERGITIKLNAVQLNYKAKDGEEYILHLIDTPGHVDFTYEVSRSLAACEGAILVVDAAQGIEAQTLANVYLALDNNLEILPVINKIDLPSADPERVRQEVEDVIGLDASEAVLASAKAGIGIEEILEQIVEKVPAPTGDSEEPLQCMIFDSLYDPYRGVIAYIRVVNGTVKVGDKVRMMATGKEFEVTEVGVFTPKTTQRDELTVGDVGFLAASIKNVGDTRVGDTITHAKRPAAEPLAGYRKLNPMVFCGLYPIDSARYNDLRDALEKLELNDSALEFEPETSQALGFGFRCGFLGLLHMEIIQERIEREFKIDLITTAPSVIYKVFLTNGEDMIVDNPSNMPDPQTIDRVEEPFVKAAIMVPNDYVGAVMEICQGKRGTFIDMQYLDETRVTLTYEIPLSEIVYDFFDQLKSNTKGYASFDYELIGYKPSKLVKMDILLNSEQVDALSFIVHRDSAYDRGKVIVEKLKELIPRQQFEVPIQATIGNKVVARSTIKAMRKNVLAKCYGGDISRKRKLLDKQKEGKKRMKSVGSVEVPQEAFMAVLKMDDN.

Residues 11–193 (SKIRNFSIIA…QIVEKVPAPT (183 aa)) form the tr-type G domain. Residues 23–28 (DHGKST) and 140–143 (NKID) contribute to the GTP site.

This sequence belongs to the TRAFAC class translation factor GTPase superfamily. Classic translation factor GTPase family. LepA subfamily.

The protein resides in the cell membrane. It catalyses the reaction GTP + H2O = GDP + phosphate + H(+). Required for accurate and efficient protein synthesis under certain stress conditions. May act as a fidelity factor of the translation reaction, by catalyzing a one-codon backward translocation of tRNAs on improperly translocated ribosomes. Back-translocation proceeds from a post-translocation (POST) complex to a pre-translocation (PRE) complex, thus giving elongation factor G a second chance to translocate the tRNAs correctly. Binds to ribosomes in a GTP-dependent manner. The polypeptide is Elongation factor 4 (Bacillus cereus (strain AH820)).